Reading from the N-terminus, the 130-residue chain is MSTITKDQILEGVAALSVMEIVELISAMEEKFGVSAAAVAAGPAAAVAAGPAAAVEAAEEQTEFDVVLASFGENKVAVIKAVRGATGLGLKEAKDLVESAPAVLKEGVNKDEAETLKKSLEEAGASVEIK.

This sequence belongs to the bacterial ribosomal protein bL12 family. In terms of assembly, homodimer. Part of the ribosomal stalk of the 50S ribosomal subunit. Forms a multimeric L10(L12)X complex, where L10 forms an elongated spine to which 2 to 4 L12 dimers bind in a sequential fashion. Binds GTP-bound translation factors.

In terms of biological role, forms part of the ribosomal stalk which helps the ribosome interact with GTP-bound translation factors. Is thus essential for accurate translation. The sequence is that of Large ribosomal subunit protein bL12 from Yersinia pestis bv. Antiqua (strain Angola).